Consider the following 396-residue polypeptide: Acetate kinase (396 aa).

Mg(2+) is bound at residue Asn8. Position 15 (Lys15) interacts with ATP. A substrate-binding site is contributed by Arg89. Catalysis depends on Asp146, which acts as the Proton donor/acceptor. Residues 206-210 (HIGNG), 283-285 (DMR), and 331-335 (GVGEN) each bind ATP. Glu383 contributes to the Mg(2+) binding site.

It belongs to the acetokinase family. In terms of assembly, homodimer. Mg(2+) serves as cofactor. Requires Mn(2+) as cofactor.

It is found in the cytoplasm. It catalyses the reaction acetate + ATP = acetyl phosphate + ADP. Its pathway is metabolic intermediate biosynthesis; acetyl-CoA biosynthesis; acetyl-CoA from acetate: step 1/2. In terms of biological role, catalyzes the formation of acetyl phosphate from acetate and ATP. Can also catalyze the reverse reaction. In Streptococcus pneumoniae (strain ATCC 700669 / Spain 23F-1), this protein is Acetate kinase.